Reading from the N-terminus, the 607-residue chain is Autophagy-related protein 22-2 (607 aa).

The segment at 9–31 (FQSPSPDEGVQQRPPRYVGEDTT) is disordered. The chain crosses the membrane as a helical span at residues 44 to 64 (YGIAAEVFAVCGVGSFLPLTL). N-linked (GlcNAc...) asparagine glycans are attached at residues Asn88 and Asn91. 3 helical membrane-spanning segments follow: residues 111–131 (SFAM…LISF), 143–160 (TLLM…MLFV), and 161–178 (FIAP…VVGV). Residues 203-263 (QEGKADDGTE…GMGTKAPLSS (61 aa)) form a disordered region. N-linked (GlcNAc...) asparagine glycosylation occurs at Asn235. Helical transmembrane passes span 277-297 (GIGL…IMLL), 310-330 (TLPM…FTLV), 381-401 (VLIF…VSGT), 415-435 (PLIG…AFLW), 450-470 (IILC…AYIP), 484-504 (WEIF…ASYC), 521-543 (YALY…GGIV), and 552-572 (GFFF…MVNA). A disordered region spans residues 585 to 607 (TLGKSHGGPAEDAQEAEGLLARE).

This sequence belongs to the ATG22 family.

Its subcellular location is the vacuole membrane. Vacuolar effluxer which mediate the efflux of amino acids resulting from autophagic degradation. The release of autophagic amino acids allows the maintenance of protein synthesis and viability during nitrogen starvation. The protein is Autophagy-related protein 22-2 (atg22-2) of Penicillium rubens (strain ATCC 28089 / DSM 1075 / NRRL 1951 / Wisconsin 54-1255) (Penicillium chrysogenum).